A 142-amino-acid chain; its full sequence is uncharacterized protein (142 aa).

Over 1–9 (MDMVSPVLN) the chain is Cytoplasmic. A helical transmembrane segment spans residues 10 to 30 (LQSSILGELVGIIGKVFFLLI). Residues 31–41 (EEIKYPIITPK) are Extracellular-facing. A helical membrane pass occupies residues 42–62 (IIVDAQISSWSLFFFASICNL). Residues 63–101 (SAKFREPIVTTSSIISLMESEKDLKNVNEYFQIMAKMLF) lie on the Cytoplasmic side of the membrane. A helical transmembrane segment spans residues 102–122 (ILENKIVVSLFVVFNISVLII). Residues 123-142 (VKSEPYSYGKVLFKPSSSIF) are Extracellular-facing.

It is found in the membrane. This is an uncharacterized protein from Saccharomyces cerevisiae (strain ATCC 204508 / S288c) (Baker's yeast).